Here is a 288-residue protein sequence, read N- to C-terminus: Pantothenate synthetase (288 aa).

35-42 is an ATP binding site; the sequence is MGALHDGH. H42 acts as the Proton donor in catalysis. Residue Q66 coordinates (R)-pantoate. Q66 lines the beta-alanine pocket. 152–155 is a binding site for ATP; that stretch reads GEKD. A (R)-pantoate-binding site is contributed by Q158. Residues G181 and 189–192 contribute to the ATP site; that span reads LSSR.

It belongs to the pantothenate synthetase family. As to quaternary structure, homodimer.

The protein resides in the cytoplasm. The catalysed reaction is (R)-pantoate + beta-alanine + ATP = (R)-pantothenate + AMP + diphosphate + H(+). It functions in the pathway cofactor biosynthesis; (R)-pantothenate biosynthesis; (R)-pantothenate from (R)-pantoate and beta-alanine: step 1/1. Functionally, catalyzes the condensation of pantoate with beta-alanine in an ATP-dependent reaction via a pantoyl-adenylate intermediate. The polypeptide is Pantothenate synthetase (Maricaulis maris (strain MCS10) (Caulobacter maris)).